The primary structure comprises 451 residues: 1,3-beta-glucanosyltransferase PGA4 (451 aa).

A signal peptide spans 1 to 18 (MLFRSLVTYLSLVSSVLS). (1,3-beta-D-glucosyl)n is bound at residue Tyr-81. Residue Asn-88 is glycosylated (N-linked (GlcNAc...) asparagine). (1,3-beta-D-glucosyl)n contacts are provided by residues 108-116 (NTPHSSITR), Asn-151, Glu-152, and Arg-198. Catalysis depends on Glu-152, which acts as the Proton donor. N-linked (GlcNAc...) asparagine glycosylation occurs at Asn-245. The Nucleophile role is filled by Glu-254. Tyr-286 provides a ligand contact to (1,3-beta-D-glucosyl)n. Residues 316–336 (SQFEKTKNPSGDGGYLKSTGG) are disordered. 3 N-linked (GlcNAc...) asparagine glycosylation sites follow: Asn-347, Asn-394, and Asn-422. Positions 395–427 (YTSSITASSRASPSQTSQVSSSSATSANSTSSK) are disordered. Low complexity predominate over residues 396-426 (TSSITASSRASPSQTSQVSSSSATSANSTSS). The GPI-anchor amidated aspartate moiety is linked to residue Asp-430. The propeptide at 431–451 (AAVEGAGFLSVIALAAGIALL) is removed in mature form.

The protein belongs to the glycosyl hydrolase 72 family. The GPI-anchor is attached to the protein in the endoplasmic reticulum and serves to target the protein to the cell surface. There, the glucosamine-inositol phospholipid moiety is cleaved off and the GPI-modified mannoprotein is covalently attached via its lipidless GPI glycan remnant to the 1,6-beta-glucan of the outer cell wall layer.

It localises to the secreted. The protein localises to the cell wall. The protein resides in the membrane. Splits internally a 1,3-beta-glucan molecule and transfers the newly generated reducing end (the donor) to the non-reducing end of another 1,3-beta-glucan molecule (the acceptor) forming a 1,3-beta linkage, resulting in the elongation of 1,3-beta-glucan chains in the cell wall. Involved in cell wall biosynthesis and morphogenesis. Plays a key role in virulence. The chain is 1,3-beta-glucanosyltransferase PGA4 (PGA4) from Candida albicans (strain SC5314 / ATCC MYA-2876) (Yeast).